We begin with the raw amino-acid sequence, 125 residues long: Small ribosomal subunit protein uS13 (125 aa).

The segment at 90 to 125 (QRHRKGLPVRGQRTKTNARTRKGPKRTVAGKKKATK) is disordered.

The protein belongs to the universal ribosomal protein uS13 family. In terms of assembly, part of the 30S ribosomal subunit. Forms a loose heterodimer with protein S19. Forms two bridges to the 50S subunit in the 70S ribosome.

In terms of biological role, located at the top of the head of the 30S subunit, it contacts several helices of the 16S rRNA. In the 70S ribosome it contacts the 23S rRNA (bridge B1a) and protein L5 of the 50S subunit (bridge B1b), connecting the 2 subunits; these bridges are implicated in subunit movement. Contacts the tRNAs in the A and P-sites. The protein is Small ribosomal subunit protein uS13 of Bifidobacterium longum (strain DJO10A).